The chain runs to 471 residues: Venom prothrombin activator vestarin-D2 (471 aa).

The first 20 residues, 1 to 20, serve as a signal peptide directing secretion; that stretch reads MAPQLLLCLILTFLWSLPEA. Residues 21-40 constitute a propeptide that is removed on maturation; the sequence is ESNVFLKSNVANRFLQRTKR. The region spanning 41–86 is the Gla domain; sequence ANSIFEEIRPGNIERECVEEKCSKEEAREVFQDNEKTEAFWTVYVD. Residues E46, E47, E54, E56, E59, E60, E65, E66, E69, and E75 each carry the 4-carboxyglutamate modification. A disulfide bond links C57 and C62. An EGF-like 1; calcium-binding domain is found at 86 to 122; the sequence is DGDQCLSNPCHYRGTCKDGIGSYTCTCLPGYEGKNCE. Intrachain disulfides connect C90–C101, C95–C110, C112–C121, C129–C140, C136–C149, C151–C164, C172–C333, C233–C238, C381–C395, and C406–C434. O-linked (Hex...) serine glycosylation is present at S92. The EGF-like 2 domain occupies 129–164; sequence CRLFNGNCWHFCKTVQNDTQCSCAEGYRLGVDGFSC. Positions 182-226 are cleaved as a propeptide — activation peptide; the sequence is REASLPDFHFSDDYDAIDENNLVETVQSQSATLLKKSDNPSPDIR. A Peptidase S1 domain is found at 227–458; the sequence is IVSGLDCKLG…FIPWIKTIMR (232 aa). Catalysis depends on H268, which acts as the Charge relay system. The N-linked (GlcNAc...) asparagine glycan is linked to N271. D313 functions as the Charge relay system in the catalytic mechanism. The active-site Charge relay system is S410.

Belongs to the peptidase S1 family. Snake venom subfamily. In terms of assembly, heterodimer of a light chain and a heavy chain; disulfide-linked. The vitamin K-dependent, enzymatic carboxylation of some glutamate residues allows the modified protein to bind calcium. Expressed by the venom gland.

Its subcellular location is the secreted. It catalyses the reaction Selective cleavage of Arg-|-Thr and then Arg-|-Ile bonds in prothrombin to form thrombin.. Its function is as follows. Snake prothrombin activator that attacks the hemostatic system of prey. This protein is functionally similar to blood coagulation factor Xa. In Demansia vestigiata (Lesser black whip snake), this protein is Venom prothrombin activator vestarin-D2.